A 227-amino-acid chain; its full sequence is Nudix hydrolase 27, chloroplastic (227 aa).

The N-terminal 44 residues, 1–44 (MAVKASGFIGKSAISVHLDFSSFPVKFSCLKQFSVSSPKPLVVL), are a transit peptide targeting the chloroplast. Residues 61-208 (GYRKNVGICL…KRPVYEHVIK (148 aa)) enclose the Nudix hydrolase domain. Positions 94-115 (GGADEGEDLRNAAFRELREETG) match the Nudix box motif. Glu109 and Glu113 together coordinate Mn(2+).

Belongs to the Nudix hydrolase family. Mg(2+) serves as cofactor. Requires Mn(2+) as cofactor. In terms of tissue distribution, expressed in roots, leaves, stems and inflorescences.

It localises to the plastid. Its subcellular location is the chloroplast. Functionally, mediates the hydrolysis of some nucleoside diphosphate derivatives. Can use diadenosine 5',5'''-P(1)P(5) pentaphosphate (Ap(5)A) as substrates. The chain is Nudix hydrolase 27, chloroplastic (NUDT27) from Arabidopsis thaliana (Mouse-ear cress).